The chain runs to 272 residues: HMP-PP phosphatase (272 aa).

The active-site Nucleophile is D8. 3 residues coordinate Mg(2+): D8, D10, and D212.

Belongs to the HAD-like hydrolase superfamily. Cof family. Mg(2+) is required as a cofactor.

The enzyme catalyses 4-amino-2-methyl-5-(diphosphooxymethyl)pyrimidine + H2O = 4-amino-2-methyl-5-(phosphooxymethyl)pyrimidine + phosphate + H(+). Catalyzes the hydrolysis of 4-amino-2-methyl-5-hydroxymethylpyrimidine pyrophosphate (HMP-PP) to 4-amino-2-methyl-5-hydroxymethylpyrimidine phosphate (HMP-P). The polypeptide is HMP-PP phosphatase (Shigella flexneri serotype 5b (strain 8401)).